A 176-amino-acid chain; its full sequence is Inorganic pyrophosphatase (176 aa).

Residues K30, R44, and Y56 each contribute to the substrate site. D66, D71, and D103 together coordinate Mg(2+). Y142 is a substrate binding site.

Belongs to the PPase family. Homohexamer. Requires Mg(2+) as cofactor.

It localises to the cytoplasm. It carries out the reaction diphosphate + H2O = 2 phosphate + H(+). Catalyzes the hydrolysis of inorganic pyrophosphate (PPi) forming two phosphate ions. This is Inorganic pyrophosphatase from Vibrio cholerae serotype O1 (strain ATCC 39315 / El Tor Inaba N16961).